Reading from the N-terminus, the 457-residue chain is MVGRPVEPGALLQGQTVTVPITALAAGGDGIARLTDGRVLFVAGAVPGDTVEARLVHLKKDHGFGKILQIVQASPHRIEAPCPVAERCGSCQWQWIDYPFQLEAKQRQVREALEHLGGFAEPPVEPVIAQPRPFGYRNKSTFPIGRDARGEPVIGYYQKDSHRIVPLDACPVQDSRLDPLLAAARELIRTQGWSIYDEKHHRGALRHLGLRIGERTGQRLLTFVVNGQTLSGIKPAAQALMDRFADLVGVCLNTHTERGNTIFGPQTRCLAGQDFIEEVLDGFRFRIEPTTFFQICTSQAEILARLVARGADATAEQTVVDAYCGIGTLSLPLARAARAVVGIESHVRSVEQARQNARINGIENCRFLAGTVEALLPDLRADIVVVDPPRKGCDPEVLEAILHAVPMRVVYVSCNPATLARDLKRLVAGGYCLVGVQPVDLFAQTHHVECVATLERS.

Positions 10–69 constitute a TRAM domain; sequence ALLQGQTVTVPITALAAGGDGIARLTDGRVLFVAGAVPGDTVEARLVHLKKDHGFGKILQ. [4Fe-4S] cluster contacts are provided by C82, C88, C91, and C170. 4 residues coordinate S-adenosyl-L-methionine: Q294, Y323, E344, and D387. Catalysis depends on C414, which acts as the Nucleophile.

The protein belongs to the class I-like SAM-binding methyltransferase superfamily. RNA M5U methyltransferase family.

This is an uncharacterized protein from Gloeobacter violaceus (strain ATCC 29082 / PCC 7421).